The primary structure comprises 254 residues: Imidazole glycerol phosphate synthase subunit HisF (254 aa).

Active-site residues include Asp-11 and Asp-130.

Belongs to the HisA/HisF family. In terms of assembly, heterodimer of HisH and HisF.

Its subcellular location is the cytoplasm. It carries out the reaction 5-[(5-phospho-1-deoxy-D-ribulos-1-ylimino)methylamino]-1-(5-phospho-beta-D-ribosyl)imidazole-4-carboxamide + L-glutamine = D-erythro-1-(imidazol-4-yl)glycerol 3-phosphate + 5-amino-1-(5-phospho-beta-D-ribosyl)imidazole-4-carboxamide + L-glutamate + H(+). It functions in the pathway amino-acid biosynthesis; L-histidine biosynthesis; L-histidine from 5-phospho-alpha-D-ribose 1-diphosphate: step 5/9. Its function is as follows. IGPS catalyzes the conversion of PRFAR and glutamine to IGP, AICAR and glutamate. The HisF subunit catalyzes the cyclization activity that produces IGP and AICAR from PRFAR using the ammonia provided by the HisH subunit. The chain is Imidazole glycerol phosphate synthase subunit HisF from Trichlorobacter lovleyi (strain ATCC BAA-1151 / DSM 17278 / SZ) (Geobacter lovleyi).